The chain runs to 192 residues: Nucleoside triphosphate pyrophosphatase (192 aa).

D73 (proton acceptor) is an active-site residue.

The protein belongs to the Maf family. Requires a divalent metal cation as cofactor.

The protein localises to the cytoplasm. It carries out the reaction a ribonucleoside 5'-triphosphate + H2O = a ribonucleoside 5'-phosphate + diphosphate + H(+). The enzyme catalyses a 2'-deoxyribonucleoside 5'-triphosphate + H2O = a 2'-deoxyribonucleoside 5'-phosphate + diphosphate + H(+). Nucleoside triphosphate pyrophosphatase. May have a dual role in cell division arrest and in preventing the incorporation of modified nucleotides into cellular nucleic acids. This is Nucleoside triphosphate pyrophosphatase from Ehrlichia chaffeensis (strain ATCC CRL-10679 / Arkansas).